Consider the following 223-residue polypeptide: Noggin (223 aa).

The first 26 residues, 1–26, serve as a signal peptide directing secretion; sequence MDPPRLRVATYLLLLSVGLLLHGGAC. Residue asparagine 61 is glycosylated (N-linked (GlcNAc...) asparagine). Intrachain disulfides connect cysteine 143-cysteine 180, cysteine 166-cysteine 217, cysteine 172-cysteine 219, and cysteine 195-cysteine 204.

Belongs to the noggin family. In terms of assembly, homodimer.

It is found in the secreted. Inhibitor of bone morphogenetic proteins (BMP) signaling. The sequence is that of Noggin (nog) from Takifugu rubripes (Japanese pufferfish).